The following is a 396-amino-acid chain: Tryptophan synthase beta chain (396 aa).

At Lys86 the chain carries N6-(pyridoxal phosphate)lysine.

It belongs to the TrpB family. Tetramer of two alpha and two beta chains. Requires pyridoxal 5'-phosphate as cofactor.

The catalysed reaction is (1S,2R)-1-C-(indol-3-yl)glycerol 3-phosphate + L-serine = D-glyceraldehyde 3-phosphate + L-tryptophan + H2O. Its pathway is amino-acid biosynthesis; L-tryptophan biosynthesis; L-tryptophan from chorismate: step 5/5. Functionally, the beta subunit is responsible for the synthesis of L-tryptophan from indole and L-serine. The sequence is that of Tryptophan synthase beta chain from Yersinia enterocolitica serotype O:8 / biotype 1B (strain NCTC 13174 / 8081).